The sequence spans 1485 residues: Sex-determining transformer protein 2 (1485 aa).

The signal sequence occupies residues 1–28; sequence MSLRSNKLLVAAVIFTVVTFGLLLTSSI. Helical transmembrane passes span 438 to 458, 490 to 510, 584 to 604, 732 to 752, 923 to 943, 950 to 970, 980 to 1000, 1033 to 1053, and 1063 to 1083; these read VVYF…FFAW, IELN…NTYL, WPFI…FVDI, GILL…VMLI, LLAS…FSIT, LIFS…ISLF, DSAV…LSLF, AQVF…AGVV, and TVIL…VLVA. The interval 1131-1271 is interaction with fem-3; sequence DFHIRPTNMS…MLHMIEKVQK (141 aa). A disordered region spans residues 1143 to 1175; it reads YAPPPAKKRAKQTNNETDPEKKEDEPGTSNANN. A helical membrane pass occupies residues 1181–1201; that stretch reads AAHRLAILPWHFVLGGIPVDL. Disordered stretches follow at residues 1228-1252, 1275-1306, and 1348-1384; these read SELE…PAPE, EKEA…PSHR, and EMPP…PPHP. Residues 1275–1284 are compositionally biased toward basic and acidic residues; sequence EKEAKEKVHQ. The interval 1401–1422 is MX regulatory domain; required for tra-1 binding; it reads CEDVYWTYNDGRLPPNVAMPPR. The disordered stretch occupies residues 1442–1485; sequence PPGQPSIPIPAEAMALREERARAHREQEQRDNSQSPSPSPEPGL. Residues 1456 to 1472 show a composition bias toward basic and acidic residues; the sequence is ALREERARAHREQEQRD.

As to quaternary structure, interacts with tra-1 and fem-3. As to expression, somatic and germline tissues.

It is found in the membrane. Its function is as follows. Plays a major role in controlling sexual cell fates. Promotes female development in XX animals where it sequesters one or more of the FEM proteins to the membrane thereby freeing the tra-1 protein (a putative transcription factor) to enter the nucleus and promote female development. In XO animals it acts as a receptor for her-1 which prevents it from binding to FEM proteins thereby repressing the activity of tra-1. Negatively regulates male development when bound to fem-3 and is required together with tra-1 for promoting spermatogenesis. The sequence is that of Sex-determining transformer protein 2 from Caenorhabditis remanei (Caenorhabditis vulgaris).